Reading from the N-terminus, the 151-residue chain is D-aminoacyl-tRNA deacylase (151 aa).

Residues 138-139 carry the Gly-cisPro motif, important for rejection of L-amino acids motif; the sequence is GP.

The protein belongs to the DTD family. As to quaternary structure, homodimer.

It is found in the cytoplasm. It carries out the reaction glycyl-tRNA(Ala) + H2O = tRNA(Ala) + glycine + H(+). It catalyses the reaction a D-aminoacyl-tRNA + H2O = a tRNA + a D-alpha-amino acid + H(+). In terms of biological role, an aminoacyl-tRNA editing enzyme that deacylates mischarged D-aminoacyl-tRNAs. Also deacylates mischarged glycyl-tRNA(Ala), protecting cells against glycine mischarging by AlaRS. Acts via tRNA-based rather than protein-based catalysis; rejects L-amino acids rather than detecting D-amino acids in the active site. By recycling D-aminoacyl-tRNA to D-amino acids and free tRNA molecules, this enzyme counteracts the toxicity associated with the formation of D-aminoacyl-tRNA entities in vivo and helps enforce protein L-homochirality. The protein is D-aminoacyl-tRNA deacylase of Picosynechococcus sp. (strain ATCC 27264 / PCC 7002 / PR-6) (Agmenellum quadruplicatum).